The sequence spans 504 residues: ATP synthase subunit alpha (504 aa).

169-176 (GDRQTGKT) contacts ATP.

It belongs to the ATPase alpha/beta chains family. In terms of assembly, F-type ATPases have 2 components, CF(1) - the catalytic core - and CF(0) - the membrane proton channel. CF(1) has five subunits: alpha(3), beta(3), gamma(1), delta(1), epsilon(1). CF(0) has three main subunits: a(1), b(2) and c(9-12). The alpha and beta chains form an alternating ring which encloses part of the gamma chain. CF(1) is attached to CF(0) by a central stalk formed by the gamma and epsilon chains, while a peripheral stalk is formed by the delta and b chains.

The protein localises to the cell membrane. The catalysed reaction is ATP + H2O + 4 H(+)(in) = ADP + phosphate + 5 H(+)(out). Functionally, produces ATP from ADP in the presence of a proton gradient across the membrane. The alpha chain is a regulatory subunit. This chain is ATP synthase subunit alpha, found in Clostridium kluyveri (strain ATCC 8527 / DSM 555 / NBRC 12016 / NCIMB 10680 / K1).